A 797-amino-acid chain; its full sequence is MAP/microtubule affinity-regulating kinase 3 (797 aa).

Positions 1–35 are disordered; the sequence is MSTRTPLPTVNERDTENHISHGDGRQEVTSRTGRS. Over residues 11–28 the composition is skewed to basic and acidic residues; sequence NERDTENHISHGDGRQEV. Position 42 is a phosphoserine (serine 42). The 252-residue stretch at 56-307 folds into the Protein kinase domain; the sequence is YRLLKTIGKG…LEQIMKDRWI (252 aa). ATP-binding positions include 62-70 and lysine 85; that span reads IGKGNFAKV. Aspartate 178 serves as the catalytic Proton acceptor. A Phosphothreonine; by LKB1 modification is found at threonine 211. Positions 326-365 constitute a UBA domain; that stretch reads ISDQKRIDIMVGMGYSQEEIQESLSKMKYDEITATYLLLG. Serine 368, serine 374, serine 376, serine 380, serine 383, serine 400, serine 419, and serine 469 each carry phosphoserine. Disordered stretches follow at residues 372-504 and 585-701; these read DASD…GMTR and PDQR…KPRS. The span at 374-385 shows a compositional bias: low complexity; it reads SDSSSSSNLSLA. Residues 391–400 are compositionally biased toward polar residues; it reads SDLSNSTGQS. Composition is skewed to polar residues over residues 492–504 and 585–602; these read VPSS…GMTR and PDQR…SATT. Serine 593 and serine 596 each carry phosphoserine. The residue at position 602 (threonine 602) is a Phosphothreonine. Position 617 is a phosphothreonine; by PKC/PRKCZ (threonine 617). Phosphoserine is present on residues serine 636, serine 651, and serine 654. Over residues 637–664 the composition is skewed to polar residues; sequence PSLSHEATPLSQTRSRGSTNLFSKLTSK. Positions 669 to 678 are enriched in basic and acidic residues; sequence LPTEYERNGR. Phosphoserine is present on serine 687. Over residues 689 to 699 the composition is skewed to basic and acidic residues; the sequence is EQKDENREAKP. Residues 748 to 797 form the KA1 domain; that stretch reads DGHAESLVQWEMEVCKLPRLSLNGVRFKRISGTSIAFKNIASKIANELKL.

This sequence belongs to the protein kinase superfamily. CAMK Ser/Thr protein kinase family. SNF1 subfamily. As to quaternary structure, interacts with MAPT/TAU. Interacts with DLG5 (via coiled-coil domain). Interacts with STK3/MST2 and STK4/MST1 in the presence of DLG5. Interacts with YWHAB, YWHAG, YWHAQ and YWHAZ. Interacts with PKP2 (via N-terminus). Interacts with CDC25C. Interacts with KSR1. In terms of processing, phosphorylated at Thr-211 by STK11/LKB1 in complex with STE20-related adapter-alpha (STRADA) pseudo kinase and CAB39. Phosphorylation at Thr-617 by PRKCZ/aPKC inhibits the kinase activity.

The protein resides in the cell membrane. It localises to the cell projection. The protein localises to the dendrite. Its subcellular location is the cytoplasm. It catalyses the reaction L-seryl-[protein] + ATP = O-phospho-L-seryl-[protein] + ADP + H(+). The catalysed reaction is L-threonyl-[protein] + ATP = O-phospho-L-threonyl-[protein] + ADP + H(+). Activated by phosphorylation on Thr-211. Inhibited by phosphorylation on Thr-617. In terms of biological role, serine/threonine-protein kinase. Involved in the specific phosphorylation of microtubule-associated proteins for MAP2 and MAP4. Phosphorylates the microtubule-associated protein MAPT/TAU. Phosphorylates CDC25C on 'Ser-216'. Regulates localization and activity of some histone deacetylases by mediating phosphorylation of HDAC7, promoting subsequent interaction between HDAC7 and 14-3-3 and export from the nucleus. Regulates localization and activity of MITF by mediating its phosphorylation, promoting subsequent interaction between MITF and 14-3-3 and retention in the cytosol. Negatively regulates the Hippo signaling pathway and antagonizes the phosphorylation of LATS1. Cooperates with DLG5 to inhibit the kinase activity of STK3/MST2 toward LATS1. Phosphorylates PKP2 and KSR1. The protein is MAP/microtubule affinity-regulating kinase 3 (Mark3) of Rattus norvegicus (Rat).